Reading from the N-terminus, the 417-residue chain is Frizzy aggregation protein FrzCD (417 aa).

Positions 1–11 (MSLDTPNEKPA) are enriched in basic and acidic residues. Positions 1–34 (MSLDTPNEKPAGKARARKAPASKAGATNAASTSS) are disordered. Residues 21–34 (ASKAGATNAASTSS) show a composition bias toward low complexity. The Methyl-accepting transducer domain occupies 144-380 (AALRLSSSAN…QVVASMAEIE (237 aa)).

The protein belongs to the methyl-accepting chemotaxis (MCP) protein family. Post-translationally, methylated. Saturated fatty acids capric acid and lauric acid stimulate methylation. Short-chain alcohols, such as isoamyl alcohol, and some other solvents cause demethylation.

The protein localises to the cytoplasm. Functionally, methyl-accepting taxis protein necessary for the proper aggregation of cells to form fruiting bodies. Frz genes define a system of signal transduction analogous to the enterobacterial chemotaxis systems. This is Frizzy aggregation protein FrzCD (frzCD) from Myxococcus xanthus.